The sequence spans 249 residues: Probable transcriptional regulatory protein Wbm0670 (249 aa).

This sequence belongs to the TACO1 family.

It localises to the cytoplasm. This is Probable transcriptional regulatory protein Wbm0670 from Wolbachia sp. subsp. Brugia malayi (strain TRS).